The following is a 244-amino-acid chain: Ribosomal RNA small subunit methyltransferase G (244 aa).

Residues Gly-79, Phe-84, 130-131 (AE), and Arg-150 each bind S-adenosyl-L-methionine. The tract at residues 221 to 244 (KKPSPKRYPRKPGTPAKQPLTAPM) is disordered.

It belongs to the methyltransferase superfamily. RNA methyltransferase RsmG family.

It is found in the cytoplasm. Its function is as follows. Specifically methylates the N7 position of a guanine in 16S rRNA. The protein is Ribosomal RNA small subunit methyltransferase G of Lactiplantibacillus plantarum (strain ATCC BAA-793 / NCIMB 8826 / WCFS1) (Lactobacillus plantarum).